Here is a 564-residue protein sequence, read N- to C-terminus: Juvenile hormone esterase (564 aa).

The first 19 residues, 1–19 (MTSHVLALAFLLHACTALA), serve as a signal peptide directing secretion. An N-linked (GlcNAc...) asparagine glycan is attached at N81. A disulfide bond links C89 and C109. N180 is a glycosylation site (N-linked (GlcNAc...) asparagine). The active-site Acyl-ester intermediate is S220. Residue E351 is the Charge relay system of the active site. A glycan (N-linked (GlcNAc...) asparagine) is linked at N402. H465 functions as the Charge relay system in the catalytic mechanism. A glycan (N-linked (GlcNAc...) asparagine) is linked at N515.

This sequence belongs to the type-B carboxylesterase/lipase family.

It catalyses the reaction juvenile hormone I + H2O = juvenile hormone I carboxylate + methanol + H(+). The enzyme catalyses juvenile hormone III + H2O = juvenile hormone III carboxylate + methanol + H(+). Its function is as follows. JH esterase plays a crucial role in the decrease of JH activity in lepidopteran insects, by hydrolyzing the methyl ester of JH. It is also involved in the transport of JH. In Heliothis virescens (Tobacco budworm moth), this protein is Juvenile hormone esterase.